Reading from the N-terminus, the 186-residue chain is ATP-dependent protease subunit HslV (186 aa).

The active site involves Thr-14. Na(+)-binding residues include Ala-168, Cys-171, and Thr-174.

Belongs to the peptidase T1B family. HslV subfamily. A double ring-shaped homohexamer of HslV is capped on each side by a ring-shaped HslU homohexamer. The assembly of the HslU/HslV complex is dependent on binding of ATP.

Its subcellular location is the cytoplasm. It carries out the reaction ATP-dependent cleavage of peptide bonds with broad specificity.. Allosterically activated by HslU binding. Protease subunit of a proteasome-like degradation complex believed to be a general protein degrading machinery. The sequence is that of ATP-dependent protease subunit HslV from Bradyrhizobium diazoefficiens (strain JCM 10833 / BCRC 13528 / IAM 13628 / NBRC 14792 / USDA 110).